Here is a 446-residue protein sequence, read N- to C-terminus: Glutamate-1-semialdehyde 2,1-aminomutase (446 aa).

At K263 the chain carries N6-(pyridoxal phosphate)lysine.

It belongs to the class-III pyridoxal-phosphate-dependent aminotransferase family. HemL subfamily. Requires pyridoxal 5'-phosphate as cofactor.

It is found in the cytoplasm. It catalyses the reaction (S)-4-amino-5-oxopentanoate = 5-aminolevulinate. It functions in the pathway porphyrin-containing compound metabolism; protoporphyrin-IX biosynthesis; 5-aminolevulinate from L-glutamyl-tRNA(Glu): step 2/2. The polypeptide is Glutamate-1-semialdehyde 2,1-aminomutase (Haloquadratum walsbyi (strain DSM 16790 / HBSQ001)).